A 255-amino-acid polypeptide reads, in one-letter code: 5'-nucleotidase SurE (255 aa).

D8, D9, S40, and N93 together coordinate a divalent metal cation.

Belongs to the SurE nucleotidase family. A divalent metal cation serves as cofactor.

It localises to the cytoplasm. It carries out the reaction a ribonucleoside 5'-phosphate + H2O = a ribonucleoside + phosphate. Nucleotidase that shows phosphatase activity on nucleoside 5'-monophosphates. This Bradyrhizobium sp. (strain BTAi1 / ATCC BAA-1182) protein is 5'-nucleotidase SurE.